The following is a 192-amino-acid chain: Orotate phosphoribosyltransferase (192 aa).

116–124 (EDIVTTGLS) contacts 5-phospho-alpha-D-ribose 1-diphosphate. Residues T120 and R148 each contribute to the orotate site.

The protein belongs to the purine/pyrimidine phosphoribosyltransferase family. PyrE subfamily. As to quaternary structure, homodimer. Mg(2+) is required as a cofactor.

It carries out the reaction orotidine 5'-phosphate + diphosphate = orotate + 5-phospho-alpha-D-ribose 1-diphosphate. It functions in the pathway pyrimidine metabolism; UMP biosynthesis via de novo pathway; UMP from orotate: step 1/2. Functionally, catalyzes the transfer of a ribosyl phosphate group from 5-phosphoribose 1-diphosphate to orotate, leading to the formation of orotidine monophosphate (OMP). This is Orotate phosphoribosyltransferase from Brucella anthropi (strain ATCC 49188 / DSM 6882 / CCUG 24695 / JCM 21032 / LMG 3331 / NBRC 15819 / NCTC 12168 / Alc 37) (Ochrobactrum anthropi).